The following is a 281-amino-acid chain: Probable endonuclease 4 (281 aa).

9 residues coordinate Zn(2+): H69, H109, E145, D179, H182, H216, D229, H231, and E261.

This sequence belongs to the AP endonuclease 2 family. Zn(2+) serves as cofactor.

It catalyses the reaction Endonucleolytic cleavage to 5'-phosphooligonucleotide end-products.. Endonuclease IV plays a role in DNA repair. It cleaves phosphodiester bonds at apurinic or apyrimidinic (AP) sites, generating a 3'-hydroxyl group and a 5'-terminal sugar phosphate. This chain is Probable endonuclease 4, found in Parabacteroides distasonis (strain ATCC 8503 / DSM 20701 / CIP 104284 / JCM 5825 / NCTC 11152).